The sequence spans 206 residues: MNNNFQNNIFWQKHSITRLKREKKNGHKSIVLWFTGLSGSGKSTIANFLEEILFKNGINSYLLDGDNIRSGLCSDLSFSLADRNENIRRIGEVVKMMLHAGLIILVSVISPYRNQREMVRQMLGKKNFLEVFIDTPIEICESRDPKKLYKQARTGQISDFTGIQCTYETPNTPDVLLKGTDSLKNNSKKLIKILYNHNIISFINID.

36–43 (GLSGSGKS) contacts ATP. The Phosphoserine intermediate role is filled by serine 110.

Belongs to the APS kinase family.

It catalyses the reaction adenosine 5'-phosphosulfate + ATP = 3'-phosphoadenylyl sulfate + ADP + H(+). The protein operates within sulfur metabolism; hydrogen sulfide biosynthesis; sulfite from sulfate: step 2/3. Catalyzes the synthesis of activated sulfate. This is Adenylyl-sulfate kinase (cysC) from Buchnera aphidicola subsp. Acyrthosiphon pisum (strain APS) (Acyrthosiphon pisum symbiotic bacterium).